The primary structure comprises 86 residues: Cerebrin prohormone (86 aa).

An N-terminal signal peptide occupies residues 1-27 (MFGYRSLLVLLVTLSLCLLLQSSHCSA). Positions 28 to 64 (VRTYGNDLDARARREIISLAARLIKLSMYGPEDDSFV) are excised as a propeptide. An Isoleucine amide modification is found at Ile83.

Expressed only in cerebral ganglion.

The protein resides in the secreted. May function as a hormone and may play a neuromodulatory role. This chain is Cerebrin prohormone (CBPH), found in Aplysia californica (California sea hare).